A 674-amino-acid chain; its full sequence is MMQESGTETKSNGSAIQNGSSGGNHLLECGSLREGRSNGETPAVDVGTADLAHVQQQQQALQVARQLLLQQQQQQQVSGLKSPKRNDKQPALQVPVSVAMMTPQVITPQQMQQILQQQVLSPQQLQVLLQQQQALMLQQQQLQEFYKKQQEQLQLQLLQQHAGKQPKEQQQVATQQLAFQQQLLQMQQLQQQHLLSLQRQGLLTIQPGQPALPLQPLTQGMIPTELQQLWKEVTSAHTTEETTGNNHSSLDLTTTCVSSSAPSKTSLIMNPHASTNGQLSVHTPKRESLSHEEHPHSHPLYGHGVCKWPGCEAVCEDFQSFLKHLNSEHALDDRSTAQCRVQMQVVQQLELQLAKDKERLQAMMTHLHVKSTEPKTAPQPLNLVSSVTLSKSASEASPQSLPHTPTTPTAPITPATQGPSVITTTSMHTVGPIRRRYSDKYNVPISSDIAQNQEFYKNAEVRPPFTYASLIRQAILESPEKQLTLNEIYNWFTRMFAYFRRNAATWKNAVRHNLSLHKCFVRVENVKGAVWTVDEVEFQKRRPQKISGNPSLIKNMQTSHAYCTPLNAALQASMAENSIPLYTTASMGNPTLGNLASAIREELNGAMEHTNSNESDSSPGRSPLQAVHPVHVKEEPLDPEEAEGPLSLVTTANHSPDFDHDRDYEDEPVNEDME.

Over residues 1–19 the composition is skewed to polar residues; sequence MMQESGTETKSNGSAIQNG. Residues 1–44 are disordered; sequence MMQESGTETKSNGSAIQNGSSGGNHLLECGSLREGRSNGETPAV. Ser82 carries the post-translational modification Phosphoserine. Polar residues predominate over residues 269-281; that stretch reads MNPHASTNGQLSV. Residues 269–296 form a disordered region; that stretch reads MNPHASTNGQLSVHTPKRESLSHEEHPH. Basic and acidic residues predominate over residues 284 to 296; that stretch reads PKRESLSHEEHPH. Lys285 is covalently cross-linked (Glycyl lysine isopeptide (Lys-Gly) (interchain with G-Cter in SUMO2)). The segment at 304–329 adopts a C2H2-type zinc-finger fold; it reads GVCKWPGCEAVCEDFQSFLKHLNSEH. Positions 346 to 367 are leucine-zipper; that stretch reads VQQLELQLAKDKERLQAMMTHL. Glycyl lysine isopeptide (Lys-Gly) (interchain with G-Cter in SUMO2) cross-links involve residues Lys370 and Lys375. The segment at 380 to 384 is CTBP1-binding; it reads PLNLV. The span at 388–401 shows a compositional bias: polar residues; that stretch reads TLSKSASEASPQSL. Positions 388–427 are disordered; that stretch reads TLSKSASEASPQSLPHTPTTPTAPITPATQGPSVITTTSM. Over residues 402-419 the composition is skewed to low complexity; it reads PHTPTTPTAPITPATQGP. Lys440 is covalently cross-linked (Glycyl lysine isopeptide (Lys-Gly) (interchain with G-Cter in SUMO2)). Residues 462 to 552 constitute a DNA-binding region (fork-head); that stretch reads RPPFTYASLI…PQKISGNPSL (91 aa). Residues 608 to 674 are disordered; sequence EHTNSNESDS…EDEPVNEDME (67 aa). The span at 609-620 shows a compositional bias: polar residues; sequence HTNSNESDSSPG. Position 650 is a phosphothreonine (Thr650). Residue Ser655 is modified to Phosphoserine. Residues 664-674 show a composition bias toward acidic residues; that stretch reads YEDEPVNEDME.

Forms homodimers and heterodimers with FOXP2 and FOXP4. Dimerization is required for DNA-binding. Self-associates. Interacts with CTBP1. Interacts with NCOR2 and AR. Interacts with FOXP2. Interacts with TBR1. Interacts with AURKA; this interaction facilitates the phosphorylation of FOXP1, which suppresses the expression of FBXL7. Interacts with ZMYM2.

It is found in the nucleus. Functionally, transcriptional repressor. Can act with CTBP1 to synergistically repress transcription but CTPBP1 is not essential. Plays an important role in the specification and differentiation of lung epithelium. Acts cooperatively with FOXP4 to regulate lung secretory epithelial cell fate and regeneration by restricting the goblet cell lineage program; the function may involve regulation of AGR2. Essential transcriptional regulator of B-cell development. Involved in regulation of cardiac muscle cell proliferation. Involved in the columnar organization of spinal motor neurons. Promotes the formation of the lateral motor neuron column (LMC) and the preganglionic motor column (PGC) and is required for respective appropriate motor axon projections. The segment-appropriate generation of spinal cord motor columns requires cooperation with other Hox proteins. Can regulate PITX3 promoter activity; may promote midbrain identity in embryonic stem cell-derived dopamine neurons by regulating PITX3. Negatively regulates the differentiation of T follicular helper cells T(FH)s. Involved in maintenance of hair follicle stem cell quiescence; the function probably involves regulation of FGF18. Represses transcription of various pro-apoptotic genes and cooperates with NF-kappa B-signaling in promoting B-cell expansion by inhibition of caspase-dependent apoptosis. Binds to CSF1R promoter elements and is involved in regulation of monocyte differentiation and macrophage functions; repression of CSF1R in monocytes seems to involve NCOR2 as corepressor. Involved in endothelial cell proliferation, tube formation and migration indicative for a role in angiogenesis; the role in neovascularization seems to implicate suppression of SEMA5B. Can negatively regulate androgen receptor signaling. Acts as a transcriptional activator of the FBXL7 promoter; this activity is regulated by AURKA. The protein is Forkhead box protein P1 (FOXP1) of Bos taurus (Bovine).